A 473-amino-acid chain; its full sequence is Argininosuccinate lyase (473 aa).

The protein belongs to the lyase 1 family. Argininosuccinate lyase subfamily.

It localises to the cytoplasm. It catalyses the reaction 2-(N(omega)-L-arginino)succinate = fumarate + L-arginine. Its pathway is amino-acid biosynthesis; L-arginine biosynthesis; L-arginine from L-ornithine and carbamoyl phosphate: step 3/3. This Streptomyces clavuligerus protein is Argininosuccinate lyase.